The following is a 381-amino-acid chain: Protein RecA (381 aa).

An ATP-binding site is contributed by Gly79–Thr86.

Belongs to the RecA family.

It is found in the cytoplasm. Functionally, can catalyze the hydrolysis of ATP in the presence of single-stranded DNA, the ATP-dependent uptake of single-stranded DNA by duplex DNA, and the ATP-dependent hybridization of homologous single-stranded DNAs. It interacts with LexA causing its activation and leading to its autocatalytic cleavage. The chain is Protein RecA from Streptococcus parasanguinis.